The following is a 359-amino-acid chain: 3-dehydroquinate synthase (359 aa).

Residues 72 to 77, 106 to 110, 130 to 131, Lys143, Lys152, and 170 to 173 contribute to the NAD(+) site; these read DGEQYK, GVIGD, TT, and CLKT. Glu185, His248, and His265 together coordinate Zn(2+).

It belongs to the sugar phosphate cyclases superfamily. Dehydroquinate synthase family. The cofactor is Co(2+). Zn(2+) is required as a cofactor. Requires NAD(+) as cofactor.

The protein resides in the cytoplasm. The enzyme catalyses 7-phospho-2-dehydro-3-deoxy-D-arabino-heptonate = 3-dehydroquinate + phosphate. The protein operates within metabolic intermediate biosynthesis; chorismate biosynthesis; chorismate from D-erythrose 4-phosphate and phosphoenolpyruvate: step 2/7. Its function is as follows. Catalyzes the conversion of 3-deoxy-D-arabino-heptulosonate 7-phosphate (DAHP) to dehydroquinate (DHQ). The sequence is that of 3-dehydroquinate synthase from Photobacterium profundum (strain SS9).